The sequence spans 609 residues: Replication protein A 70 kDa DNA-binding subunit (609 aa).

The segment at 112–164 is disordered; sequence IGNPHPYNDGQGPPQPAAPAPASAPPPSKPQNISAPPPPSMNRGASKLFGGGS. The segment covering 124–151 has biased composition (pro residues); sequence PPQPAAPAPASAPPPSKPQNISAPPPPS. A DNA-binding region (OB) is located at residues 189 to 273; the sequence is WTVRARVTNK…VKNDYEMTFN (85 aa). The C4-type zinc-finger motif lies at 472–494; sequence CPSQDCNKKVIDQQNGLFRCEKC.

It belongs to the replication factor A protein 1 family. As to quaternary structure, component of the heterotrimeric canonical replication protein A complex (RPA). Interacts with rpain-a.

It localises to the nucleus. Its subcellular location is the PML body. Its function is as follows. As part of the heterotrimeric replication protein A complex (RPA/RP-A), binds and stabilizes single-stranded DNA intermediates, that form during DNA replication or upon DNA stress. It prevents their reannealing and in parallel, recruits and activates different proteins and complexes involved in DNA metabolism. Thereby, it plays an essential role both in DNA replication and the cellular response to DNA damage. The chain is Replication protein A 70 kDa DNA-binding subunit (rpa1) from Xenopus tropicalis (Western clawed frog).